A 199-amino-acid chain; its full sequence is Charged multivesicular body protein 1B2 (199 aa).

Residues 15–47 adopt a coiled-coil conformation; the sequence is AKELNRNAKKCDKEEKAEKAKIKKAIQKGNTEV. Residues 132-156 form an interaction with IST1 region; the sequence is MEDTMSSTTTLTTPQNQVDMLLQEM. The segment at 167–199 is disordered; the sequence is ELPQGQTGSVGASVASTEQDELSQRLARLRDQV. The segment covering 170–183 has biased composition (polar residues); the sequence is QGQTGSVGASVAST. Residues 174-199 are interaction with SPAST; that stretch reads GSVGASVASTEQDELSQRLARLRDQV. The stretch at 177–199 forms a coiled coil; it reads GASVASTEQDELSQRLARLRDQV. Residues 180–196 form an interaction with VPS4A, MITD1 and STAMBP region; it reads VASTEQDELSQRLARLR. The interval 180–199 is interaction with VTA1; sequence VASTEQDELSQRLARLRDQV. The interaction with VPS4B stretch occupies residues 183–199; that stretch reads TEQDELSQRLARLRDQV. An MIT-interacting motif motif is present at residues 186 to 196; it reads DELSQRLARLR.

Belongs to the SNF7 family. Probable peripherally associated component of the endosomal sorting required for transport complex III (ESCRT-III). ESCRT-III components are thought to multimerize to form a flat lattice on the perimeter membrane of the endosome. Several assembly forms of ESCRT-III may exist that interact and act sequentially. Interacts with CHMP1A. Interacts with VTA1; the interaction probably involves the open conformation of CHMP1B. Interacts with CHMP2A. Interacts with VPS4A; the interaction is direct. Interacts with VPS4B; the interaction is direct. Interacts with SPAST (via MIT domain); the interaction is direct. Interacts with IST1. Interacts with MITD1. Interacts with STAMBP.

It is found in the cytoplasm. The protein resides in the cytosol. It localises to the endosome. Its subcellular location is the late endosome membrane. In terms of biological role, probable peripherally associated component of the endosomal sorting required for transport complex III (ESCRT-III) which is involved in multivesicular bodies (MVBs) formation and sorting of endosomal cargo proteins into MVBs. MVBs contain intraluminal vesicles (ILVs) that are generated by invagination and scission from the limiting membrane of the endosome and mostly are delivered to lysosomes enabling degradation of membrane proteins, such as stimulated growth factor receptors, lysosomal enzymes and lipids. The MVB pathway appears to require the sequential function of ESCRT-O, -I,-II and -III complexes. ESCRT-III proteins mostly dissociate from the invaginating membrane before the ILV is released. The ESCRT machinery also functions in topologically equivalent membrane fission events, such as the terminal stages of cytokinesis. ESCRT-III proteins are believed to mediate the necessary vesicle extrusion and/or membrane fission activities, possibly in conjunction with the AAA ATPase VPS4. Involved in cytokinesis. Involved in recruiting VPS4A and/or VPS4B and SPAST to the midbody of dividing cells. This is Charged multivesicular body protein 1B2 from Mus musculus (Mouse).